The chain runs to 104 residues: MGRIPGGCSSKAFIGRAQWLTPVIPALWEAKGLTLLSRLECSDVIMDHCSPQLTGLRMKGFLAQTPPLEFPVHQYQPGDHVLIKSWKRESLNQLRRTSSGTLDE.

This is an uncharacterized protein from Homo sapiens (Human).